Consider the following 347-residue polypeptide: S-adenosylmethionine:tRNA ribosyltransferase-isomerase (347 aa).

It belongs to the QueA family. As to quaternary structure, monomer.

Its subcellular location is the cytoplasm. The enzyme catalyses 7-aminomethyl-7-carbaguanosine(34) in tRNA + S-adenosyl-L-methionine = epoxyqueuosine(34) in tRNA + adenine + L-methionine + 2 H(+). It participates in tRNA modification; tRNA-queuosine biosynthesis. In terms of biological role, transfers and isomerizes the ribose moiety from AdoMet to the 7-aminomethyl group of 7-deazaguanine (preQ1-tRNA) to give epoxyqueuosine (oQ-tRNA). The polypeptide is S-adenosylmethionine:tRNA ribosyltransferase-isomerase (Streptococcus thermophilus (strain CNRZ 1066)).